The primary structure comprises 91 residues: Small ribosomal subunit protein eS24 (91 aa).

The interval 51-91 (QRRKDAAAHKEAYNAMPEAERRHLNSEKYANRKAEVSYKHR) is disordered.

This sequence belongs to the eukaryotic ribosomal protein eS24 family.

This Caenorhabditis elegans protein is Small ribosomal subunit protein eS24.